The chain runs to 52 residues: Large ribosomal subunit protein bL33 (52 aa).

The protein belongs to the bacterial ribosomal protein bL33 family.

The sequence is that of Large ribosomal subunit protein bL33 from Campylobacter jejuni subsp. jejuni serotype O:6 (strain 81116 / NCTC 11828).